The primary structure comprises 306 residues: UDP-3-O-acyl-N-acetylglucosamine deacetylase (306 aa).

Positions 79, 238, and 242 each coordinate Zn(2+). Residue His-265 is the Proton donor of the active site.

The protein belongs to the LpxC family. The cofactor is Zn(2+).

The catalysed reaction is a UDP-3-O-[(3R)-3-hydroxyacyl]-N-acetyl-alpha-D-glucosamine + H2O = a UDP-3-O-[(3R)-3-hydroxyacyl]-alpha-D-glucosamine + acetate. Its pathway is glycolipid biosynthesis; lipid IV(A) biosynthesis; lipid IV(A) from (3R)-3-hydroxytetradecanoyl-[acyl-carrier-protein] and UDP-N-acetyl-alpha-D-glucosamine: step 2/6. Its function is as follows. Catalyzes the hydrolysis of UDP-3-O-myristoyl-N-acetylglucosamine to form UDP-3-O-myristoylglucosamine and acetate, the committed step in lipid A biosynthesis. This Shewanella piezotolerans (strain WP3 / JCM 13877) protein is UDP-3-O-acyl-N-acetylglucosamine deacetylase.